Reading from the N-terminus, the 256-residue chain is MAVGKNKRLSKGKKGLKKKTVDPFTRKDWYSIKAPNPFNVRDVGKTLVNRTTGLKNANDALKGRIVEVSLADLQKDEDHAFRKVRLRVDEVQGKNCLTNFHGLDFTSDKLRSLVRKWQTLIEANVTVKTTDDYLIRLFAIAFTKRRPNQIKKTTYAASSQIRAIRRKMTDIIQREASSCTLTQLTSKLIPEVIGREIEKSTQGIYPLQNVHIRKVKLLKSPKFDLGALMALHGESGTDDQGQKVEREFKERVLEEV.

N-acetylalanine; partial is present on Ala-2.

Belongs to the eukaryotic ribosomal protein eS1 family. Component of the small ribosomal subunit. Mature ribosomes consist of a small (40S) and a large (60S) subunit. The 40S subunit contains about 33 different proteins and 1 molecule of RNA (18S). The 60S subunit contains about 49 different proteins and 3 molecules of RNA (25S, 5.8S and 5S).

Its subcellular location is the cytoplasm. The protein is Small ribosomal subunit protein eS1 of Fusarium vanettenii (strain ATCC MYA-4622 / CBS 123669 / FGSC 9596 / NRRL 45880 / 77-13-4) (Fusarium solani subsp. pisi).